Here is a 36-residue protein sequence, read N- to C-terminus: Protein usd (36 aa).

Required for translation of SpoIIID. The polypeptide is Protein usd (usd) (Bacillus subtilis (strain 168)).